Here is a 290-residue protein sequence, read N- to C-terminus: MEVSLNHPASNTTSTKNNNSAFFYFESCQPPSPALLLLCIAYTVVLIVGLFGNLSLIIIIFKKQRKAQNFTSILIANLSLSDTLVCVMCIHFTIIYTLMDHWIFGDTMCRLTSYVQSVSISVSIFSLVFTAVERYQLIVNPRGWKPSVTHAYWGITLIWLFSLLLSIPFFLSYHLTDEPFRNLSLPTDLYTHQVACVENWPSKKDRLLFTTSLFLLQYFVPLGFILICYLKIVICLRRRNAKVDKKKENEGRLNENKRINTMLISIVVTFGACWLPRISSMSSLTGIMRC.

Over methionine 1–cysteine 39 the chain is Extracellular. Asparagine 11 carries an N-linked (GlcNAc...) asparagine glycan. The helical transmembrane segment at isoleucine 40–isoleucine 60 threads the bilayer. The Cytoplasmic segment spans residues phenylalanine 61–threonine 83. A helical membrane pass occupies residues leucine 84–phenylalanine 104. Residues glycine 105–leucine 111 lie on the Extracellular side of the membrane. Cysteines 109 and 196 form a disulfide. A helical transmembrane segment spans residues threonine 112 to valine 132. Residues glutamate 133 to histidine 150 lie on the Cytoplasmic side of the membrane. A helical transmembrane segment spans residues alanine 151 to leucine 171. Over serine 172–arginine 206 the chain is Extracellular. Residues leucine 207–isoleucine 227 traverse the membrane as a helical segment. The Cytoplasmic portion of the chain corresponds to cysteine 228–arginine 258. Residues isoleucine 259 to serine 279 form a helical membrane-spanning segment. The Extracellular portion of the chain corresponds to serine 280–cysteine 290.

This sequence belongs to the G-protein coupled receptor 1 family. In terms of tissue distribution, expressed in heart, skeletal muscle, gastrointestinal tissues, spleen, brain and adrenal glands.

It is found in the membrane. When expressed, is unable to bind pancreatic polypeptide (PP), neuropeptide Y (NPY), or peptide YY (PYY), suggesting that either it is functionally inactive or that it may have acquired a pancreatic polypeptide-independent function. The sequence is that of Putative neuropeptide Y receptor type 6 (NPY6R) from Homo sapiens (Human).